Consider the following 345-residue polypeptide: S-adenosylmethionine:tRNA ribosyltransferase-isomerase (345 aa).

This sequence belongs to the QueA family. In terms of assembly, monomer.

It is found in the cytoplasm. The catalysed reaction is 7-aminomethyl-7-carbaguanosine(34) in tRNA + S-adenosyl-L-methionine = epoxyqueuosine(34) in tRNA + adenine + L-methionine + 2 H(+). The protein operates within tRNA modification; tRNA-queuosine biosynthesis. In terms of biological role, transfers and isomerizes the ribose moiety from AdoMet to the 7-aminomethyl group of 7-deazaguanine (preQ1-tRNA) to give epoxyqueuosine (oQ-tRNA). The polypeptide is S-adenosylmethionine:tRNA ribosyltransferase-isomerase (Shewanella sp. (strain MR-4)).